The following is a 57-amino-acid chain: Large ribosomal subunit protein bL33 (57 aa).

Belongs to the bacterial ribosomal protein bL33 family.

This Shewanella sp. (strain W3-18-1) protein is Large ribosomal subunit protein bL33.